A 1049-amino-acid polypeptide reads, in one-letter code: DEAD-box ATP-dependent RNA helicase 42 (1049 aa).

Disordered stretches follow at residues 1–279 (MGSS…DEID) and 299–358 (MPAA…DDEE). Residues 64-106 (KERDREERKAREREEREKEKERERARRREERDREERSRRREAA) show a composition bias toward basic and acidic residues. Basic residues predominate over residues 118-131 (RKRRRRSSHHHHHH). Basic and acidic residues-rich tracts occupy residues 161 to 170 (KKEEEQKQLD) and 181 to 199 (KEWQ…REQE). Residues 201–214 (AGVGTSAAAAAAPA) show a composition bias toward low complexity. Positions 229–239 (DGEESDEEGNQ) are enriched in acidic residues. A compositionally biased stretch (low complexity) spans 262 to 272 (NGGDNANGANA). Over residues 304–313 (VDDKNDKSAK) the composition is skewed to basic and acidic residues. The span at 335–358 (EDSDSDYADDEDDEGGSEDEDDEE) shows a compositional bias: acidic residues. The short motif at 424–452 (KTWVQSGLTSKLLDTIKKLGFEKPMSIQA) is the Q motif element. Residues 455–633 (LPIIMSGRDC…RKVLTKPVEI (179 aa)) enclose the Helicase ATP-binding domain. 468–475 (AKTGSGKT) contacts ATP. Residues 581–584 (DEAD) carry the DEAD box motif. The region spanning 644–805 (DITQLVEVRP…AVPEDLKGLA (162 aa)) is the Helicase C-terminal domain. The interval 816–868 (TEQAHGTGYGGSGFKFNEEEDEARKSAKKAQAREYGYEEDKSDSDSDEEGGVR) is disordered. Acidic residues predominate over residues 855–864 (DKSDSDSDEE). Residues 1012–1037 (TELSVKKAKAELKRVLEDCANHALNL) adopt a coiled-coil conformation.

It belongs to the DEAD box helicase family. DDX46/PRP5 subfamily.

The catalysed reaction is ATP + H2O = ADP + phosphate + H(+). The polypeptide is DEAD-box ATP-dependent RNA helicase 42 (Oryza sativa subsp. japonica (Rice)).